Consider the following 155-residue polypeptide: Small ribosomal subunit protein uS7cz/uS7cy (155 aa).

In terms of assembly, component of the chloroplast small ribosomal subunit (SSU). Mature 70S chloroplast ribosomes of higher plants consist of a small (30S) and a large (50S) subunit. The 30S small subunit contains 1 molecule of ribosomal RNA (16S rRNA) and 24 different proteins. The 50S large subunit contains 3 rRNA molecules (23S, 5S and 4.5S rRNA) and 33 different proteins.

It localises to the plastid. Its subcellular location is the chloroplast. In terms of biological role, component of the chloroplast ribosome (chloro-ribosome), a dedicated translation machinery responsible for the synthesis of chloroplast genome-encoded proteins, including proteins of the transcription and translation machinery and components of the photosynthetic apparatus. The chain is Small ribosomal subunit protein uS7cz/uS7cy (rps7-A) from Spinacia oleracea (Spinach).